The primary structure comprises 218 residues: Large ribosomal subunit protein uL3 (218 aa).

This sequence belongs to the universal ribosomal protein uL3 family. As to quaternary structure, part of the 50S ribosomal subunit. Forms a cluster with proteins L14 and L19.

In terms of biological role, one of the primary rRNA binding proteins, it binds directly near the 3'-end of the 23S rRNA, where it nucleates assembly of the 50S subunit. The sequence is that of Large ribosomal subunit protein uL3 from Rhodococcus jostii (strain RHA1).